The following is a 725-amino-acid chain: Dolichyl-phosphate-mannose--protein mannosyltransferase 5 (725 aa).

6 consecutive transmembrane segments (helical) span residues 34-54 (QFAV…LYIP), 117-137 (YLWL…LTFF), 145-165 (SVIS…VTVS), 192-212 (IPFT…LGLN), 219-239 (GLFT…EILG), and 256-276 (VVAF…IHFE). MIR domains lie at 303-356 (PLQV…IETK), 368-427 (QREV…IRML), and 439-495 (LIKL…VESS). Asn-409 carries an N-linked (GlcNAc...) asparagine glycan. 4 consecutive transmembrane segments (helical) span residues 570–590 (IYYL…LIAI), 619–639 (FYNN…PYCL), 644–664 (LYLH…SQYL), and 673–693 (IIGG…FYEF).

The protein belongs to the glycosyltransferase 39 family.

The protein resides in the endoplasmic reticulum membrane. It carries out the reaction a di-trans,poly-cis-dolichyl beta-D-mannosyl phosphate + L-seryl-[protein] = 3-O-(alpha-D-mannosyl)-L-seryl-[protein] + a di-trans,poly-cis-dolichyl phosphate + H(+). The catalysed reaction is a di-trans,poly-cis-dolichyl beta-D-mannosyl phosphate + L-threonyl-[protein] = 3-O-(alpha-D-mannosyl)-L-threonyl-[protein] + a di-trans,poly-cis-dolichyl phosphate + H(+). It participates in protein modification; protein glycosylation. Its function is as follows. Protein mannosyltransferase (PMT) involved in hyphal morphogenesis and drug sensitivity. Transfers mannose from Dol-P-mannose to Ser or Thr residues on proteins. PMT1, PMT2 and PMT4 account for most of the protein-O-glycosylation activity, while PMT5 and PMT6 may specifically modulate a much narrower spectrum of target proteins. Required for biofilm formation. The protein is Dolichyl-phosphate-mannose--protein mannosyltransferase 5 of Candida albicans (strain SC5314 / ATCC MYA-2876) (Yeast).